The chain runs to 586 residues: CTP synthase 2 (586 aa).

Positions 300–554 (SIALVGKYTK…LAATGTLNTH (255 aa)) constitute a Glutamine amidotransferase type-1 domain. Residues C399, H526, and E528 each act as for GATase activity in the active site. S568, S571, and S574 each carry phosphoserine.

It belongs to the CTP synthase family.

The enzyme catalyses UTP + L-glutamine + ATP + H2O = CTP + L-glutamate + ADP + phosphate + 2 H(+). The protein operates within pyrimidine metabolism; CTP biosynthesis via de novo pathway; CTP from UDP: step 2/2. Its function is as follows. Catalyzes the ATP-dependent amination of UTP to CTP with either L-glutamine or ammonia as the source of nitrogen. Constitutes the rate-limiting enzyme in the synthesis of cytosine nucleotides. The sequence is that of CTP synthase 2 (Ctps2) from Rattus norvegicus (Rat).